Reading from the N-terminus, the 373-residue chain is DNA replication and repair protein RecF (373 aa).

30-37 (GENAQGKT) is an ATP binding site.

This sequence belongs to the RecF family.

It is found in the cytoplasm. Its function is as follows. The RecF protein is involved in DNA metabolism; it is required for DNA replication and normal SOS inducibility. RecF binds preferentially to single-stranded, linear DNA. It also seems to bind ATP. The protein is DNA replication and repair protein RecF of Bacillus cytotoxicus (strain DSM 22905 / CIP 110041 / 391-98 / NVH 391-98).